The sequence spans 102 residues: Small ribosomal subunit protein uS10 (102 aa).

Belongs to the universal ribosomal protein uS10 family. As to quaternary structure, part of the 30S ribosomal subunit.

Functionally, involved in the binding of tRNA to the ribosomes. This Methylobacterium radiotolerans (strain ATCC 27329 / DSM 1819 / JCM 2831 / NBRC 15690 / NCIMB 10815 / 0-1) protein is Small ribosomal subunit protein uS10.